The sequence spans 199 residues: Probable chemoreceptor glutamine deamidase CheD (199 aa).

This sequence belongs to the CheD family.

It catalyses the reaction L-glutaminyl-[protein] + H2O = L-glutamyl-[protein] + NH4(+). In terms of biological role, probably deamidates glutamine residues to glutamate on methyl-accepting chemotaxis receptors (MCPs), playing an important role in chemotaxis. This is Probable chemoreceptor glutamine deamidase CheD from Cereibacter sphaeroides (strain ATCC 17025 / ATH 2.4.3) (Rhodobacter sphaeroides).